The primary structure comprises 356 residues: Altered inheritance of mitochondria protein 23, mitochondrial (356 aa).

The transit peptide at 1-32 (MLKVPLSDVLSQKMLFLKSFRYFHCTKYFSRD) directs the protein to the mitochondrion.

It belongs to the AIM23 family.

It is found in the mitochondrion. This is Altered inheritance of mitochondria protein 23, mitochondrial (AIM23) from Saccharomyces cerevisiae (strain ATCC 204508 / S288c) (Baker's yeast).